Here is a 92-residue protein sequence, read N- to C-terminus: Signal recognition particle 19 kDa protein (92 aa).

Belongs to the SRP19 family. In terms of assembly, part of the signal recognition particle protein translocation system, which is composed of SRP and FtsY. Archaeal SRP consists of a 7S RNA molecule of 300 nucleotides and two protein subunits: SRP54 and SRP19.

Its subcellular location is the cytoplasm. Functionally, involved in targeting and insertion of nascent membrane proteins into the cytoplasmic membrane. Binds directly to 7S RNA and mediates binding of the 54 kDa subunit of the SRP. This chain is Signal recognition particle 19 kDa protein, found in Haloferax volcanii (strain ATCC 29605 / DSM 3757 / JCM 8879 / NBRC 14742 / NCIMB 2012 / VKM B-1768 / DS2) (Halobacterium volcanii).